Here is a 360-residue protein sequence, read N- to C-terminus: Phospho-N-acetylmuramoyl-pentapeptide-transferase (360 aa).

The next 10 membrane-spanning stretches (helical) occupy residues 26 to 46, 70 to 90, 94 to 114, 132 to 152, 168 to 188, 199 to 219, 236 to 256, 263 to 283, 288 to 308, and 338 to 358; these read AILS…IMIK, GTPT…ILLW, SNPY…VGFV, WKYF…YAYG, VMPQ…VGTS, GLAI…AWAT, ASEL…FLWF, VFMG…IAVL, LVLV…ILQV, and VIVR…ATLK.

This sequence belongs to the glycosyltransferase 4 family. MraY subfamily. Mg(2+) serves as cofactor.

It is found in the cell inner membrane. It catalyses the reaction UDP-N-acetyl-alpha-D-muramoyl-L-alanyl-gamma-D-glutamyl-meso-2,6-diaminopimeloyl-D-alanyl-D-alanine + di-trans,octa-cis-undecaprenyl phosphate = di-trans,octa-cis-undecaprenyl diphospho-N-acetyl-alpha-D-muramoyl-L-alanyl-D-glutamyl-meso-2,6-diaminopimeloyl-D-alanyl-D-alanine + UMP. Its pathway is cell wall biogenesis; peptidoglycan biosynthesis. Functionally, catalyzes the initial step of the lipid cycle reactions in the biosynthesis of the cell wall peptidoglycan: transfers peptidoglycan precursor phospho-MurNAc-pentapeptide from UDP-MurNAc-pentapeptide onto the lipid carrier undecaprenyl phosphate, yielding undecaprenyl-pyrophosphoryl-MurNAc-pentapeptide, known as lipid I. The sequence is that of Phospho-N-acetylmuramoyl-pentapeptide-transferase from Vibrio parahaemolyticus serotype O3:K6 (strain RIMD 2210633).